The sequence spans 65 residues: Large ribosomal subunit protein bL35 (65 aa).

Residues 1 to 43 (MPKMKTRRGAAKRFAKTGSGKFKRRKQGLRHILTKKTAKRKSR) show a composition bias toward basic residues. The segment at 1–49 (MPKMKTRRGAAKRFAKTGSGKFKRRKQGLRHILTKKTAKRKSRLGQSAT) is disordered.

This sequence belongs to the bacterial ribosomal protein bL35 family.

In Maridesulfovibrio salexigens (strain ATCC 14822 / DSM 2638 / NCIMB 8403 / VKM B-1763) (Desulfovibrio salexigens), this protein is Large ribosomal subunit protein bL35.